The primary structure comprises 146 residues: Prolactin-inducible protein homolog (146 aa).

The signal sequence occupies residues 1–28; that stretch reads MHLLQLLFRASPATLLLVLCLQLGANKA. Pyrrolidone carboxylic acid is present on Gln-29. 2 disulfides stabilise this stretch: Cys-65-Cys-91 and Cys-89-Cys-123. Residue Asn-105 is glycosylated (N-linked (GlcNAc...) asparagine).

It belongs to the PIP family. As to quaternary structure, monomer. Interacts with AZGP1.

It is found in the secreted. This is Prolactin-inducible protein homolog (PIP) from Pongo pygmaeus (Bornean orangutan).